A 468-amino-acid polypeptide reads, in one-letter code: Probable Xaa-Pro aminopeptidase PEPP (468 aa).

The Mn(2+) site is built by D264, D275, E398, and E438.

Belongs to the peptidase M24B family. The cofactor is Mn(2+).

It carries out the reaction Release of any N-terminal amino acid, including proline, that is linked to proline, even from a dipeptide or tripeptide.. Catalyzes the removal of a penultimate prolyl residue from the N-termini of peptides. The chain is Probable Xaa-Pro aminopeptidase PEPP (PEPP) from Paracoccidioides brasiliensis (strain Pb18).